A 121-amino-acid polypeptide reads, in one-letter code: uncharacterized protein (121 aa).

Residues 85–111 (NANNDDYESPYKTPKIKSNPSLDSSGS) form a disordered region. Residues 100–111 (IKSNPSLDSSGS) are compositionally biased toward polar residues.

This is an uncharacterized protein from Dictyostelium discoideum (Social amoeba).